The following is a 486-amino-acid chain: MSNYSIKQSAKNNYSSSSSGGFRGGHGGNEYFCGVGGEGDFGGMGGFGACGAGYGGGAGYGGGAGGAGYGGGAGGGGAGYGGGFGGGSGAGYGGGFGGGAGGGYGGGFGGGFGGGAGGMDIFSTNEKQTMQNLNDRLASYLDKVHALETANTELERKIKEWYEKQRPGSSSGDGAKDYSKYYTMINDLKNQIIAASIENAKFLLQNDNARLAADDFKMKFENEQYMRQTVEADINGLRRVMDDLTLSKSDLESQLESLSEELAYLKKNHEDELKGMQVTQVGQVNVEMNAAPSSDLTKILNDMRSQYEDLAKRNRAAAEEQFNRMSTDLKNTLSQGIEQQKESKSELTELKRTLQSLEIELQSQLAMKKSLEMTLAEVEGSFCMKLSRLQEMIVNVEEQIARLKGESECQTAEYQQLLDIKTRLENEIETYRRLLDGDLSKPKSGGGTSTNTGSTSSKGSTRTVKRREIIEEVVDGKVVSTKVVDM.

The head stretch occupies residues 1–125; sequence MSNYSIKQSA…AGGMDIFSTN (125 aa). The segment at 126 to 161 is coil 1A; sequence EKQTMQNLNDRLASYLDKVHALETANTELERKIKEW. The IF rod domain occupies 126–442; that stretch reads EKQTMQNLND…RLLDGDLSKP (317 aa). Positions 162 to 184 are linker 1; the sequence is YEKQRPGSSSGDGAKDYSKYYTM. The segment at 185-276 is coil 1B; that stretch reads INDLKNQIIA…KNHEDELKGM (92 aa). The tract at residues 277–299 is linker 12; sequence QVTQVGQVNVEMNAAPSSDLTKI. Positions 300–438 are coil 2; sequence LNDMRSQYED…ETYRRLLDGD (139 aa). The tract at residues 435–466 is disordered; sequence LDGDLSKPKSGGGTSTNTGSTSSKGSTRTVKR. Residues 439 to 486 form a tail region; that stretch reads LSKPKSGGGTSTNTGSTSSKGSTRTVKRREIIEEVVDGKVVSTKVVDM. Low complexity predominate over residues 449–461; it reads STNTGSTSSKGST.

This sequence belongs to the intermediate filament family. In terms of assembly, heterotetramer of two type I and two type II keratins.

The sequence is that of Keratin-3, type I cytoskeletal 51 kDa from Xenopus laevis (African clawed frog).